Reading from the N-terminus, the 464-residue chain is tRNA modification GTPase MnmE (464 aa).

3 residues coordinate (6S)-5-formyl-5,6,7,8-tetrahydrofolate: arginine 29, glutamate 91, and arginine 131. One can recognise a TrmE-type G domain in the interval 226–387 (GLKVALTGKP…LINYLLKKCG (162 aa)). Asparagine 236 provides a ligand contact to K(+). GTP contacts are provided by residues 236-241 (NVGKSS), 255-261 (TDLPGTT), and 280-283 (DTAG). Serine 240 serves as a coordination point for Mg(2+). Residues threonine 255, leucine 257, and threonine 260 each contribute to the K(+) site. Threonine 261 contacts Mg(2+). Lysine 464 contacts (6S)-5-formyl-5,6,7,8-tetrahydrofolate.

This sequence belongs to the TRAFAC class TrmE-Era-EngA-EngB-Septin-like GTPase superfamily. TrmE GTPase family. As to quaternary structure, homodimer. Heterotetramer of two MnmE and two MnmG subunits. It depends on K(+) as a cofactor.

Its subcellular location is the cytoplasm. Its function is as follows. Exhibits a very high intrinsic GTPase hydrolysis rate. Involved in the addition of a carboxymethylaminomethyl (cmnm) group at the wobble position (U34) of certain tRNAs, forming tRNA-cmnm(5)s(2)U34. This Prochlorococcus marinus (strain NATL2A) protein is tRNA modification GTPase MnmE.